We begin with the raw amino-acid sequence, 185 residues long: Lectin B4 (185 aa).

A glycan (N-linked (GlcNAc...) asparagine) is linked at N48. Mn(2+)-binding residues include E111 and D113. Ca(2+) contacts are provided by D113, Y115, N117, and D120. Position 120 (D120) interacts with Mn(2+). N122 carries N-linked (GlcNAc...) asparagine glycosylation. Position 125 (H125) interacts with Mn(2+).

This sequence belongs to the leguminous lectin family. Homo- or heterotetramer. V.villosa isolectins are composed of either two subunits a and two subunits B (A2B2), four subunits A (A4), or four subunits B (B4). The predominant form, isolectin B4, has no A1 erythrocyte agglutinating activity.

Its function is as follows. N-acetyl-D-galactosamine specific lectin. Binds the Tn determinant (GalNAc-alpha-O-Ser/Thr) of the tumor-associated glycopeptide. Could be required for agglutinating cells such as Tn-exposed erythrocytes. The polypeptide is Lectin B4 (Vicia villosa (Hairy vetch)).